The following is a 181-amino-acid chain: MPKCDYCDVYLTHDSMSVRKAHNSGRNHLRNVVDYYQQIGHEKAQSVIDSITSSYAAEGQSSSNPMLHNPAAATPFPPFPPANFPGGVPPPFPPASGPGGMPFPPPGARGFPMPPLPGQPGAPPMPPFPGMPAGMPFPPPGGLPPNFQFPIPPPGGFPGMPPPGQGFPGMPPPGGNHDERR.

The Matrin-type zinc finger occupies 2–34; it reads PKCDYCDVYLTHDSMSVRKAHNSGRNHLRNVVD. 2 stretches are compositionally biased toward pro residues: residues 129-143 and 150-174; these read PGMP…PGGL and PIPP…PPPG. The segment at 129–181 is disordered; it reads PGMPAGMPFPPPGGLPPNFQFPIPPPGGFPGMPPPGQGFPGMPPPGGNHDERR.

This sequence belongs to the U1 small nuclear ribonucleoprotein C family. U1 snRNP is composed of the 7 core Sm proteins B/B', D1, D2, D3, E, F and G that assemble in a heptameric protein ring on the Sm site of the small nuclear RNA to form the core snRNP, and at least 3 U1 snRNP-specific proteins U1-70K, U1-A and U1-C. U1-C interacts with U1 snRNA and the 5' splice-site region of the pre-mRNA.

It is found in the nucleus. Its function is as follows. Component of the spliceosomal U1 snRNP, which is essential for recognition of the pre-mRNA 5' splice-site and the subsequent assembly of the spliceosome. U1-C is directly involved in initial 5' splice-site recognition for both constitutive and regulated alternative splicing. The interaction with the 5' splice-site seems to precede base-pairing between the pre-mRNA and the U1 snRNA. Stimulates commitment or early (E) complex formation by stabilizing the base pairing of the 5' end of the U1 snRNA and the 5' splice-site region. The protein is U1 small nuclear ribonucleoprotein C of Sclerotinia sclerotiorum (strain ATCC 18683 / 1980 / Ss-1) (White mold).